The chain runs to 468 residues: Probable citrate synthase, mitochondrial (468 aa).

Catalysis depends on residues histidine 303, histidine 349, and aspartate 404.

Belongs to the citrate synthase family. Homodimer.

Its subcellular location is the mitochondrion matrix. The catalysed reaction is oxaloacetate + acetyl-CoA + H2O = citrate + CoA + H(+). Its pathway is carbohydrate metabolism; tricarboxylic acid cycle; isocitrate from oxaloacetate: step 1/2. This is Probable citrate synthase, mitochondrial (cts-1) from Caenorhabditis elegans.